The chain runs to 129 residues: Small ribosomal subunit protein uS11 (129 aa).

The protein belongs to the universal ribosomal protein uS11 family. In terms of assembly, part of the 30S ribosomal subunit. Interacts with proteins S7 and S18. Binds to IF-3.

Located on the platform of the 30S subunit, it bridges several disparate RNA helices of the 16S rRNA. Forms part of the Shine-Dalgarno cleft in the 70S ribosome. The polypeptide is Small ribosomal subunit protein uS11 (Pseudomonas fluorescens (strain SBW25)).